We begin with the raw amino-acid sequence, 236 residues long: Small ribosomal subunit protein uS2c (236 aa).

It belongs to the universal ribosomal protein uS2 family.

Its subcellular location is the plastid. The protein localises to the chloroplast. The protein is Small ribosomal subunit protein uS2c (rps2) of Platanus occidentalis (Sycamore).